A 134-amino-acid polypeptide reads, in one-letter code: FK506-binding protein 2 (134 aa).

A signal peptide spans 1–19 (MRFSIFSTLLVSLATLSTA). The region spanning 39–127 (GDTVQMHYKG…IFETELVGID (89 aa)) is the PPIase FKBP-type domain. The short motif at 131–134 (KDEL) is the Prevents secretion from ER element.

Belongs to the FKBP-type PPIase family. FKBP2 subfamily.

Its subcellular location is the endoplasmic reticulum. The catalysed reaction is [protein]-peptidylproline (omega=180) = [protein]-peptidylproline (omega=0). Inhibited by both FK506 and rapamycin. Its function is as follows. PPIases accelerate the folding of proteins. It catalyzes the cis-trans isomerization of proline imidic peptide bonds in oligopeptides. This chain is FK506-binding protein 2 (fpr2), found in Aspergillus oryzae (strain ATCC 42149 / RIB 40) (Yellow koji mold).